The following is a 208-amino-acid chain: Thioesterase 1/protease 1/lysophospholipase L1 (208 aa).

The signal sequence occupies residues 1–26 (MMNFNNVFRWHLPFLFLVLLTFRAAA). Catalysis depends on Ser-36, which acts as the Nucleophile. Substrate contacts are provided by Gly-70 and Asn-99. Active-site residues include Asp-180 and His-183.

It belongs to the 'GDSL' lipolytic enzyme family. Monomer or homotetramer.

The protein resides in the periplasm. The enzyme catalyses a fatty acyl-CoA + H2O = a fatty acid + CoA + H(+). The catalysed reaction is hexadecanoyl-CoA + H2O = hexadecanoate + CoA + H(+). It carries out the reaction (9Z)-hexadecenoyl-CoA + H2O = (9Z)-hexadecenoate + CoA + H(+). It catalyses the reaction octadecanoyl-CoA + H2O = octadecanoate + CoA + H(+). The enzyme catalyses (9Z)-octadecenoyl-CoA + H2O = (9Z)-octadecenoate + CoA + H(+). The catalysed reaction is (9Z)-octadecenoyl-[ACP] + H2O = (9Z)-octadecenoate + holo-[ACP] + H(+). It carries out the reaction (11Z)-octadecenoyl-CoA + H2O = (11Z)-octadecenoate + CoA + H(+). It catalyses the reaction tetradecanoyl-CoA + H2O = tetradecanoate + CoA + H(+). The enzyme catalyses (5Z,8Z,11Z,14Z)-eicosatetraenoyl-CoA + H2O = (5Z,8Z,11Z,14Z)-eicosatetraenoate + CoA + H(+). The catalysed reaction is dodecanoyl-CoA + H2O = dodecanoate + CoA + H(+). It carries out the reaction decanoyl-CoA + H2O = decanoate + CoA + H(+). It catalyses the reaction hexanoyl-CoA + H2O = hexanoate + CoA + H(+). The enzyme catalyses a 1-acyl-sn-glycero-3-phosphocholine + H2O = sn-glycerol 3-phosphocholine + a fatty acid + H(+). The catalysed reaction is a phenyl acetate + H2O = a phenol + acetate + H(+). It carries out the reaction a butanoate ester + H2O = an aliphatic alcohol + butanoate + H(+). It catalyses the reaction a hexanoate ester + H2O = an aliphatic alcohol + hexanoate + H(+). The enzyme catalyses an octanoate ester + H2O = an aliphatic alcohol + octanoate + H(+). TesA is a multifunctional esterase that can act as a thioesterase, arylesterase, lysophospholipase and protease. This chain is Thioesterase 1/protease 1/lysophospholipase L1 (tesA), found in Escherichia coli O6:H1 (strain CFT073 / ATCC 700928 / UPEC).